We begin with the raw amino-acid sequence, 134 residues long: Retinol-binding protein 2 (134 aa).

All-trans-retinol is bound by residues lysine 41 and glutamine 109.

This sequence belongs to the calycin superfamily. Fatty-acid binding protein (FABP) family. Higher expression in adult small intestine and to a much lesser extent in fetal kidney.

It localises to the cytoplasm. Its function is as follows. Intracellular transport of retinol. The polypeptide is Retinol-binding protein 2 (RBP2) (Homo sapiens (Human)).